The chain runs to 432 residues: Thiol-specific monooxygenase (432 aa).

FAD contacts are provided by residues 13–17 and 46–47; these read GGGPG and VW. Position 65–66 (65–66) interacts with NADP(+); sequence TN. FAD is bound at residue 117-118; that stretch reads EV. 199-202 is an NADP(+) binding site; it reads SGQD.

Belongs to the FMO family. As to quaternary structure, monomer. FAD serves as cofactor.

In terms of biological role, flavin-dependent oxidation of thiol-containing compounds. Probably required for the correct folding of disulfide-bonded proteins. The chain is Thiol-specific monooxygenase (FMO1) from Saccharomyces cerevisiae (strain ATCC 204508 / S288c) (Baker's yeast).